We begin with the raw amino-acid sequence, 281 residues long: Nucleotide-binding protein CTN_0898 (281 aa).

9-16 (GLSGAGKT) is a binding site for ATP. 58–61 (DVRS) contacts GTP.

Belongs to the RapZ-like family.

Displays ATPase and GTPase activities. The polypeptide is Nucleotide-binding protein CTN_0898 (Thermotoga neapolitana (strain ATCC 49049 / DSM 4359 / NBRC 107923 / NS-E)).